The following is a 514-amino-acid chain: 2,3-bisphosphoglycerate-independent phosphoglycerate mutase (514 aa).

2 residues coordinate Mn(2+): D14 and S64. S64 acts as the Phosphoserine intermediate in catalysis. Substrate is bound by residues H125, 155–156 (RD), R187, R193, 263–266 (RADR), and K336. D403, H407, D444, H445, and H463 together coordinate Mn(2+).

Belongs to the BPG-independent phosphoglycerate mutase family. Monomer. Requires Mn(2+) as cofactor.

The enzyme catalyses (2R)-2-phosphoglycerate = (2R)-3-phosphoglycerate. It participates in carbohydrate degradation; glycolysis; pyruvate from D-glyceraldehyde 3-phosphate: step 3/5. Its function is as follows. Catalyzes the interconversion of 2-phosphoglycerate and 3-phosphoglycerate. The protein is 2,3-bisphosphoglycerate-independent phosphoglycerate mutase of Enterobacter sp. (strain 638).